The chain runs to 351 residues: Actin maturation protease (351 aa).

Residues 1-19 show a composition bias toward pro residues; that stretch reads MTSPCSPPLKPPISPPKTP. Residues 1-70 are disordered; it reads MTSPCSPPLK…PPAATGPAPR (70 aa). Residues 36–50 show a composition bias toward low complexity; sequence LDFSALPSPPWSQQT. The segment covering 51-64 has biased composition (pro residues); sequence PVPPPLPLPPPPAA. The tract at residues 124–244 is peptidase C39-like; sequence SLIQEGPQCG…WAVSAGVLLG (121 aa). Residue cysteine 132 is part of the active site. The residue at position 316 (serine 316) is a Phosphoserine.

It belongs to the ACTMAP family. In terms of assembly, interacts (via N-terminus) with PFN2 isoforms IIa and IIb; the interactions may facilitate efficient cleavage of the acetylated N-terminus of immature actin. Interacts with PFN1.

It localises to the cytoplasm. The enzyme catalyses N-terminal N(alpha)-acetyl-L-methionyl-L-aspartyl-[protein] + H2O = N-terminal L-aspartyl-[protein] + N-acetyl-L-methionine. It carries out the reaction N-terminal N(alpha)-acetyl-L-methionyl-L-glutamyl-[protein] + H2O = N-terminal L-glutamyl-[protein] + N-acetyl-L-methionine. It catalyses the reaction N-terminal N(alpha)-acetyl-L-cysteinyl-L-aspartyl-[protein] + H2O = N-terminal L-aspartyl-[protein] + N-acetyl-L-cysteine. The catalysed reaction is N-terminal N(alpha)-acetyl-L-cysteinyl-L-glutamyl-[protein] + H2O = N-terminal L-glutamyl-[protein] + N-acetyl-L-cysteine. Actin maturation protease that specifically mediates the cleavage of immature acetylated N-terminal actin, thereby contributing to actin maturation. Cleaves N-terminal acetylated methionine of immature cytoplasmic beta- and gamma-actins ACTB and ACTG1 after translation. Cleaves N-terminal acetylated cysteine of muscle alpha-actins ACTA1, ACTC1 and ACTA2 after canonical removal of N-terminal methionine. The sequence is that of Actin maturation protease from Homo sapiens (Human).